A 203-amino-acid polypeptide reads, in one-letter code: MAVPTGRALVFVTGNAKKLEEVVQILGDKFPYKLISKKIDLPEYQGEPDDISIQKCKEAARQVDGPVLVEDTCLCFRALEGLPGPYIKWFLDKLKPEGLYKMLAGFEDKSAWALCTFAFCAGKEEPVQLFRGITEGHIVEPRGPRDFGWDPCFQPEGYDKTYAELPKEVKNSISHRYRALAALSEHFCQDNGAPETKRSKHQD.

An ITP-binding site is contributed by 13–18; sequence TGNAKK. Glu43 provides a ligand contact to Mg(2+). ITP contacts are provided by residues Lys55, 71–72, Lys88, 147–150, Lys170, and 175–176; these read DT, FGWD, and HR.

Belongs to the HAM1 NTPase family. In terms of assembly, homodimer. Mg(2+) is required as a cofactor. It depends on Mn(2+) as a cofactor.

The protein localises to the cytoplasm. The enzyme catalyses ITP + H2O = IMP + diphosphate + H(+). It catalyses the reaction dITP + H2O = dIMP + diphosphate + H(+). It carries out the reaction XTP + H2O = XMP + diphosphate + H(+). The catalysed reaction is N(6)-hydroxy-dATP + H2O = N(6)-hydroxy-dAMP + diphosphate + H(+). Functionally, pyrophosphatase that hydrolyzes the non-canonical purine nucleotides inosine triphosphate (ITP), deoxyinosine triphosphate (dITP) as well as 2'-deoxy-N-6-hydroxylaminopurine triphosphate (dHAPTP) and xanthosine 5'-triphosphate (XTP) to their respective monophosphate derivatives. The enzyme does not distinguish between the deoxy- and ribose forms. Probably excludes non-canonical purines from RNA and DNA precursor pools, thus preventing their incorporation into RNA and DNA and avoiding chromosomal lesions. This is Inosine triphosphate pyrophosphatase (itpa) from Danio rerio (Zebrafish).